A 389-amino-acid polypeptide reads, in one-letter code: Indole-3-acetate monooxygenase (389 aa).

This sequence belongs to the HpaH/HsaA monooxygenase family.

It catalyses the reaction (indol-3-yl)acetate + NADH + O2 + H(+) = 2-hydroxy-(1H-indol-3-yl)acetate + NAD(+) + H2O. The enzyme catalyses indole + NADH + O2 + H(+) = indoxyl + NAD(+) + H2O. Functionally, involved in the degradation of the plant hormone indole-3-acetic acid (IAA). Catalyzes the first step of the pathway, the conversion of IAA to 2-hydroxy-IAA (2-OH-IAA). Can also convert indole to indoxyl, which spontaneously dimerizes in the presence of oxygen to form the blue pigment indigo. The chain is Indole-3-acetate monooxygenase from Pseudomonas putida (Arthrobacter siderocapsulatus).